The primary structure comprises 120 residues: Phosphoribosyl-ATP pyrophosphatase (120 aa).

A disordered region spans residues 97 to 120 (REGTSGLVEKASRPAKKDSGTADS). Over residues 106-120 (KASRPAKKDSGTADS) the composition is skewed to basic and acidic residues.

It belongs to the PRA-PH family.

The protein resides in the cytoplasm. It catalyses the reaction 1-(5-phospho-beta-D-ribosyl)-ATP + H2O = 1-(5-phospho-beta-D-ribosyl)-5'-AMP + diphosphate + H(+). Its pathway is amino-acid biosynthesis; L-histidine biosynthesis; L-histidine from 5-phospho-alpha-D-ribose 1-diphosphate: step 2/9. The polypeptide is Phosphoribosyl-ATP pyrophosphatase (Rhodopirellula baltica (strain DSM 10527 / NCIMB 13988 / SH1)).